The primary structure comprises 290 residues: ATP synthase gamma chain (290 aa).

This sequence belongs to the ATPase gamma chain family. In terms of assembly, F-type ATPases have 2 components, CF(1) - the catalytic core - and CF(0) - the membrane proton channel. CF(1) has five subunits: alpha(3), beta(3), gamma(1), delta(1), epsilon(1). CF(0) has three main subunits: a, b and c.

The protein resides in the cell membrane. Its function is as follows. Produces ATP from ADP in the presence of a proton gradient across the membrane. The gamma chain is believed to be important in regulating ATPase activity and the flow of protons through the CF(0) complex. This is ATP synthase gamma chain from Listeria innocua serovar 6a (strain ATCC BAA-680 / CLIP 11262).